A 240-amino-acid polypeptide reads, in one-letter code: EF-hand domain-containing protein D1 (240 aa).

The interval 17–54 (EVRAETDQGDPQPAPCDAPAGHPEPEPPARAPTASADS) is disordered. EF-hand domains follow at residues 91 to 126 (RLLK…LGAP) and 127 to 162 (QTHL…AAAG). Residues Asp-104, Asp-108, Glu-115, Asp-140, Asp-142, Asp-144, Lys-146, and Glu-151 each contribute to the Ca(2+) site.

As to expression, widely expressed. Highest expression in testis, followed by ovary, kidney, cerebrum, cerebellum, heart, liver, and spleen. In the cerebrum and cerebellum, undetectable at embryonic stages, expression increases after birth up to adult stage. In adult CNS, detected in neurons of the cerebellum, cerebrum and hippocampus formation, including dentate gyrus and Cornu Ammonis, but not in the white matter. In the testis, expressed in spermatocytes, but not in spermatogonia nor in interstitial cells. In ovary, found predominantly in mural granulosa cells and those of the cumulus oophorus. In kidney, expressed in collecting ducts, but not in glomeruli. Not detected in skeletal muscle.

Its subcellular location is the mitochondrion inner membrane. Acts as a calcium sensor for mitochondrial flash (mitoflash) activation, an event characterized by stochastic bursts of superoxide production. May play a role in neuronal differentiation. In Mus musculus (Mouse), this protein is EF-hand domain-containing protein D1 (Efhd1).